A 332-amino-acid polypeptide reads, in one-letter code: MKKIAVDAMGGDNAPQALVEGVNRAVQEFSDIEILLYGDEAKIKPYLTAGERVRIIHTEEKIDSDDEPTKAIRQKKEASMVLAAKAVKAGEADAMLSAGNTGALLAAGFFIVGRIKNIDRPGLLSTMPTVGGQGFDMLDLGANAENTAHHLHQYATLGSFYAENVRGIKKPRVGLLNNGTESSKGDPLRKEAYELLSGDSTLNFIGNVEARDLMDDVADVVVADGFTGNAVLKSIEGTAISIMGQLKKSILGGGFKAKLGAWLLKDSLRGLKNSLDYSSAGGAVLFGLKAPVVKTHGSSDAKAVYSTIRQIRTMLETDVVGKSVIEFSDAKE.

It belongs to the PlsX family. Homodimer. Probably interacts with PlsY.

The protein localises to the cytoplasm. The catalysed reaction is a fatty acyl-[ACP] + phosphate = an acyl phosphate + holo-[ACP]. Its pathway is lipid metabolism; phospholipid metabolism. In terms of biological role, catalyzes the reversible formation of acyl-phosphate (acyl-PO(4)) from acyl-[acyl-carrier-protein] (acyl-ACP). This enzyme utilizes acyl-ACP as fatty acyl donor, but not acyl-CoA. The chain is Phosphate acyltransferase from Streptococcus sanguinis (strain SK36).